The sequence spans 354 residues: Allantoicase (354 aa).

The protein belongs to the allantoicase family.

The catalysed reaction is allantoate + H2O = (S)-ureidoglycolate + urea. Its pathway is nitrogen metabolism; (S)-allantoin degradation; (S)-ureidoglycolate from allantoate (aminidohydrolase route): step 1/1. Functionally, utilization of purines as secondary nitrogen sources, when primary sources are limiting. This Neurospora crassa (strain ATCC 24698 / 74-OR23-1A / CBS 708.71 / DSM 1257 / FGSC 987) protein is Allantoicase (alc-1).